The following is a 429-amino-acid chain: Enolase (429 aa).

Residue Gln-174 coordinates (2R)-2-phosphoglycerate. Residue Glu-218 is the Proton donor of the active site. 3 residues coordinate Mg(2+): Asp-254, Glu-295, and Asp-321. The (2R)-2-phosphoglycerate site is built by Lys-346, Arg-375, Ser-376, and Lys-397. Lys-346 acts as the Proton acceptor in catalysis.

It belongs to the enolase family. Requires Mg(2+) as cofactor.

It localises to the cytoplasm. It is found in the secreted. The protein localises to the cell surface. The catalysed reaction is (2R)-2-phosphoglycerate = phosphoenolpyruvate + H2O. It participates in carbohydrate degradation; glycolysis; pyruvate from D-glyceraldehyde 3-phosphate: step 4/5. Its function is as follows. Catalyzes the reversible conversion of 2-phosphoglycerate (2-PG) into phosphoenolpyruvate (PEP). It is essential for the degradation of carbohydrates via glycolysis. This Methanosarcina acetivorans (strain ATCC 35395 / DSM 2834 / JCM 12185 / C2A) protein is Enolase.